The sequence spans 186 residues: dTTP/UTP pyrophosphatase (186 aa).

Asp67 serves as the catalytic Proton acceptor.

It belongs to the Maf family. YhdE subfamily. It depends on a divalent metal cation as a cofactor.

It localises to the cytoplasm. It catalyses the reaction dTTP + H2O = dTMP + diphosphate + H(+). The enzyme catalyses UTP + H2O = UMP + diphosphate + H(+). Its function is as follows. Nucleoside triphosphate pyrophosphatase that hydrolyzes dTTP and UTP. May have a dual role in cell division arrest and in preventing the incorporation of modified nucleotides into cellular nucleic acids. The polypeptide is dTTP/UTP pyrophosphatase (Carboxydothermus hydrogenoformans (strain ATCC BAA-161 / DSM 6008 / Z-2901)).